A 148-amino-acid polypeptide reads, in one-letter code: Putative HTH-type transcriptional regulator NMA1593 (148 aa).

Residues 2–131 (RLTTKGRFAV…GSVTLQSIIE (130 aa)) form the HTH rrf2-type domain.

This is Putative HTH-type transcriptional regulator NMA1593 from Neisseria meningitidis serogroup A / serotype 4A (strain DSM 15465 / Z2491).